A 68-amino-acid polypeptide reads, in one-letter code: Large ribosomal subunit protein bL31 (68 aa).

Cys16, Cys18, Cys36, and Cys39 together coordinate Zn(2+).

Belongs to the bacterial ribosomal protein bL31 family. Type A subfamily. In terms of assembly, part of the 50S ribosomal subunit. Zn(2+) serves as cofactor.

Binds the 23S rRNA. The chain is Large ribosomal subunit protein bL31 from Dictyoglomus thermophilum (strain ATCC 35947 / DSM 3960 / H-6-12).